The following is a 471-amino-acid chain: MTDLPDSTRWQLWIVAFGFFMQSLDTTIVNTALPSMAQSLGESPLHMHMVIVSYVLTVAVMLPASGWLADKVGVRNIFFTAIVLFTLGSLFCALSGTLNELLLARALQGVGGAMMVPVGRLTVMKIVPREQYMAAMTFVTLPGQVGPLLGPALGGLLVEYASWHWIFLINIPVGIIGAIATLMLMPNYTMQTRRFDLSGFLLLAVGMAVLTLALDGSKGTGLSPLAIAGLVAVGVVALVLYLLHARNNNRALFSLKLFRTRTFSLGLAGSFAGRIGSGMLPFMTPVFLQIGLGFSPFHAGLMMIPMVLGSMGMKRIVVQVVNRFGYRRVLVATTLGLSLVTLLFMTTALLGWYYVLPFVLFLQGMVNSTRFSSMNTLTLKDLPDNLASSGNSLLSMIMQLSMSIGVTIAGLLLGLFGSQHVSVDSGTTQTVFMYTWLSMAFIIALPAFIFARVPNDTHQNVAISRRKRSAQ.

Topologically, residues 1–11 are periplasmic; it reads MTDLPDSTRWQ. The chain crosses the membrane as a helical span at residues 12-32; it reads LWIVAFGFFMQSLDTTIVNTA. At 33–48 the chain is on the cytoplasmic side; the sequence is LPSMAQSLGESPLHMH. Residues 49 to 69 form a helical membrane-spanning segment; the sequence is MVIVSYVLTVAVMLPASGWLA. Residues 70 to 76 lie on the Periplasmic side of the membrane; sequence DKVGVRN. A helical membrane pass occupies residues 77 to 97; that stretch reads IFFTAIVLFTLGSLFCALSGT. Topologically, residues 98-101 are cytoplasmic; that stretch reads LNEL. A helical membrane pass occupies residues 102–124; the sequence is LLARALQGVGGAMMVPVGRLTVM. The Periplasmic segment spans residues 125-137; it reads KIVPREQYMAAMT. A helical transmembrane segment spans residues 138 to 158; it reads FVTLPGQVGPLLGPALGGLLV. Residues 159 to 164 lie on the Cytoplasmic side of the membrane; the sequence is EYASWH. A helical transmembrane segment spans residues 165 to 185; sequence WIFLINIPVGIIGAIATLMLM. The Periplasmic segment spans residues 186 to 196; that stretch reads PNYTMQTRRFD. The chain crosses the membrane as a helical span at residues 197–217; the sequence is LSGFLLLAVGMAVLTLALDGS. At 218–224 the chain is on the cytoplasmic side; that stretch reads KGTGLSP. Residues 225–245 traverse the membrane as a helical segment; that stretch reads LAIAGLVAVGVVALVLYLLHA. Over 246–262 the chain is Periplasmic; it reads RNNNRALFSLKLFRTRT. The chain crosses the membrane as a helical span at residues 263-283; that stretch reads FSLGLAGSFAGRIGSGMLPFM. The Cytoplasmic portion of the chain corresponds to 284 to 285; the sequence is TP. Residues 286–306 form a helical membrane-spanning segment; sequence VFLQIGLGFSPFHAGLMMIPM. Residues 307 to 341 are Periplasmic-facing; it reads VLGSMGMKRIVVQVVNRFGYRRVLVATTLGLSLVT. A helical membrane pass occupies residues 342–362; the sequence is LLFMTTALLGWYYVLPFVLFL. The Cytoplasmic portion of the chain corresponds to 363-395; the sequence is QGMVNSTRFSSMNTLTLKDLPDNLASSGNSLLS. Residues 396–416 form a helical membrane-spanning segment; it reads MIMQLSMSIGVTIAGLLLGLF. Over 417 to 430 the chain is Periplasmic; that stretch reads GSQHVSVDSGTTQT. Residues 431-451 form a helical membrane-spanning segment; that stretch reads VFMYTWLSMAFIIALPAFIFA. At 452 to 471 the chain is on the cytoplasmic side; it reads RVPNDTHQNVAISRRKRSAQ.

This sequence belongs to the major facilitator superfamily. TCR/Tet family.

It localises to the cell inner membrane. In Escherichia coli (strain SMS-3-5 / SECEC), this protein is Putative multidrug resistance protein MdtD.